A 103-amino-acid polypeptide reads, in one-letter code: MYAVFQSGGKQHRVAPGHTVRLEKLEVATGSTVEFDQVLLIADGEKVHVGAPLVAGGKVVAEVVSHGRGEKVTIVKFRRRKHHDKKMGHRQWFTEVKITAINA.

It belongs to the bacterial ribosomal protein bL21 family. Part of the 50S ribosomal subunit. Contacts protein L20.

This protein binds to 23S rRNA in the presence of protein L20. This Shewanella sp. (strain MR-7) protein is Large ribosomal subunit protein bL21.